The following is a 411-amino-acid chain: Growth-regulating factor 7 (411 aa).

The QLQ domain occupies 38–73 (PFTPTQWMELEHQALIYKHIVANAPVPAGLLLPIRR). The 45-residue stretch at 108 to 152 (DSEPGRCRRTDGKKWRCSRDAVVDQKYCERHINRGRHRSRKHVEG) folds into the WRC domain. Short sequence motifs (bipartite nuclear localization signal) lie at residues 113–123 (RCRRTDGKKWR) and 141–148 (RGRHRSRK). The segment at 333–369 (FFTNTSSASDDKGKSRHPPSLNLLADGHTTSPQLQSP) is disordered. Over residues 360 to 369 (HTTSPQLQSP) the composition is skewed to polar residues.

It belongs to the GRF family.

Its subcellular location is the nucleus. In terms of biological role, transcription activator that plays a regulatory role in gibberellin-induced stem elongation. In Oryza sativa subsp. japonica (Rice), this protein is Growth-regulating factor 7 (GRF7).